Reading from the N-terminus, the 450-residue chain is Bicarbonate-binding protein CmpA (450 aa).

Positions 1–36 (MNEFQPVNRRQFLFTLGATAASAILLKGCGNPPSSS) form a signal peptide, tat-type signal.

It belongs to the CmpA/NrtA family. In terms of assembly, the complex is composed of two ATP-binding proteins (CmpC and CmpD), a transmembrane protein (CmpB) and a solute-binding protein (CmpA). In terms of processing, predicted to be exported by the Tat system. The position of the signal peptide cleavage has not been experimentally proven. The N-terminus is blocked.

Its subcellular location is the cell inner membrane. Functionally, part of the ABC transporter complex CmpABCD involved in bicarbonate transport. Binds bicarbonate with high affinity. The protein is Bicarbonate-binding protein CmpA (cmpA) of Synechococcus elongatus (strain ATCC 33912 / PCC 7942 / FACHB-805) (Anacystis nidulans R2).